Here is a 165-residue protein sequence, read N- to C-terminus: Myosin regulatory light chain 2B, cardiac muscle isoform (165 aa).

Position 2 is a n,N,N-trimethylalanine (alanine 2). 3 EF-hand domains span residues 23 to 58 (TQIQ…LGRL), 93 to 128 (DPEE…QEGR), and 129 to 164 (FSQE…GEEK). Ca(2+)-binding residues include aspartate 36, asparagine 38, aspartate 40, and aspartate 47.

In terms of assembly, myosin is a hexamer of 2 heavy chains and 4 light chains. The N-terminus is blocked. N,N,N-trimethylalanine, found in other myosin light chains would not have been detected in the N-terminal tryptic peptide in PubMed:7319048 because it would remain trimethylated and ninhydrin negative after hydrolysis.

This Gallus gallus (Chicken) protein is Myosin regulatory light chain 2B, cardiac muscle isoform.